An 813-amino-acid polypeptide reads, in one-letter code: MNCNVLFLLSVLVSVTAGVTAAYHPTDVFLFNCGDTSNNVDNSGRNWTVESRQILSSNLVNASFTSEASYQKAGVSRIPYMKARIFRSEFTYSFPVTPGSIFLRLYFYPTQYKSGFDAVNSFFSVKVNGFTLLRNFNADSTVQASIPLSNSLIKEFIIPVHQTLNLTFTPSKNLLAFVNGIEIVSMPDRFYSKGGFDNVLRNVSSDVDFQIDNSTAFESVHRLNVGGQIVNEVDDSGMFRRWLSDDSFGNSGSIVNVPGVKINYTEKTPAYVAPYDVYATSRLMGNSSNLMFNLTGMFLTVDAGYNYLVRLHFCETLPQVTKAGQRVFSIFVEDKMAKKETDVIRLSGGPRIPMYLDFSVYVGFESGMIQPELRLDLVPLKDTNQTYYDAILSGVEILKLNDSDGNLARPNPELLVSTDSTPDDSNVTPPIKGKPHVLVIILIVVGSVIGLATFIVIIMLLIRQMKRKKNKKENSVIMFKLLLKQYIYAELKKITKSFSHTVGKGGFGTVYRGNLSNGRTVAVKVLKDLKGNGDDFINEVTSMSQTSHVNIVSLLGFCYEGSKRAIISEFLEHGSLDQFISRNKSLTPNVTTLYGIALGIARGLEYLHYGCKTRIVHFDIKPQNILLDDNFCPKVADFGLAKLCEKRESILSLIDTRGTIGYIAPEVVSRMYGGISHKSDVYSYGMLVLDMIGARNKVETTTCNGSTAYFPDWIYKDLENGDQTWIIGDEINEEDNKIVKKMILVSLWCIRPCPSDRPPMNKVVEMIEGSLDALELPPKPSRHISTELVLESSSLSDGQEAEKQTQTLDSTII.

Residues 1 to 21 (MNCNVLFLLSVLVSVTAGVTA) form the signal peptide. Residues 22-437 (AYHPTDVFLF…TPPIKGKPHV (416 aa)) lie on the Extracellular side of the membrane. N-linked (GlcNAc...) asparagine glycans are attached at residues asparagine 46, asparagine 61, asparagine 165, asparagine 202, asparagine 213, asparagine 263, asparagine 286, asparagine 293, asparagine 384, and asparagine 401. Residues 438–458 (LVIILIVVGSVIGLATFIVII) traverse the membrane as a helical segment. Residues 459-813 (MLLIRQMKRK…QTQTLDSTII (355 aa)) are Cytoplasmic-facing. The Protein kinase domain maps to 496–771 (KSFSHTVGKG…KVVEMIEGSL (276 aa)). ATP is bound by residues 502-510 (VGKGGFGTV) and lysine 524. Aspartate 619 (proton acceptor) is an active-site residue. The disordered stretch occupies residues 791 to 813 (ESSSLSDGQEAEKQTQTLDSTII). The span at 804–813 (QTQTLDSTII) shows a compositional bias: polar residues.

This sequence belongs to the protein kinase superfamily. Ser/Thr protein kinase family.

It localises to the membrane. This chain is Probable receptor-like protein kinase At5g39020, found in Arabidopsis thaliana (Mouse-ear cress).